The primary structure comprises 98 residues: snRNA-activating protein complex subunit 5 (98 aa).

The tract at residues 75–98 (ALELSTRSHVQEEEEEEEEEEEDS) is disordered. A compositionally biased stretch (acidic residues) spans 86 to 98 (EEEEEEEEEEEDS).

Part of the SNAPc complex composed of 5 subunits: SNAPC1, SNAPC2, SNAPC3, SNAPC4 and SNAPC5. SNAPC5 interacts with SNAPC4.

It localises to the nucleus. Functionally, part of the SNAPc complex required for the transcription of both RNA polymerase II and III small-nuclear RNA genes. Binds to the proximal sequence element (PSE), a non-TATA-box basal promoter element common to these 2 types of genes. Recruits TBP and BRF2 to the U6 snRNA TATA box. The chain is snRNA-activating protein complex subunit 5 (SNAPC5) from Bos taurus (Bovine).